Consider the following 55-residue polypeptide: Large ribosomal subunit protein bL33 (55 aa).

The protein belongs to the bacterial ribosomal protein bL33 family.

The chain is Large ribosomal subunit protein bL33 from Acidiphilium cryptum (strain JF-5).